The primary structure comprises 259 residues: Tonin (259 aa).

An N-terminal signal peptide occupies residues 1–18 (MWLQILSLVLSVGRIDAA). The propeptide at 19–24 (PPGQSR) is activation peptide. A Peptidase S1 domain is found at 25–256 (IVGGYKCEKN…FTSWIKKVMK (232 aa)). 5 cysteine pairs are disulfide-bonded: Cys-31-Cys-171, Cys-48-Cys-64, Cys-150-Cys-217, Cys-182-Cys-196, and Cys-207-Cys-232. His-63 (charge relay system) is an active-site residue. His-63 is a Zn(2+) binding site. N-linked (GlcNAc...) asparagine glycosylation is present at Asn-106. 2 residues coordinate Zn(2+): His-113 and His-115. Residue Asp-118 is the Charge relay system of the active site. An N-linked (GlcNAc...) asparagine glycan is attached at Asn-189. The active-site Charge relay system is Ser-211.

Belongs to the peptidase S1 family. Kallikrein subfamily. Monomer. Zn(2+) serves as cofactor. Found in submaxillary gland.

The enzyme catalyses Preferential cleavage of Arg-|-Xaa bonds in small molecule substrates. Highly selective action to release kallidin (lysyl-bradykinin) from kininogen involves hydrolysis of Met-|-Xaa or Leu-|-Xaa.. In terms of biological role, this protein has both trypsin- and chymotrypsin-like activities, being able to release angiotensin II from angiotensin I or angiotensinogen. This Rattus norvegicus (Rat) protein is Tonin (Klk2).